Consider the following 432-residue polypeptide: Enolase (432 aa).

Residues 41-64 (QVPSGASTGSFEAHELRDGDPKRY) are disordered. Positions 52-64 (EAHELRDGDPKRY) are enriched in basic and acidic residues. Glutamine 168 provides a ligand contact to (2R)-2-phosphoglycerate. The active-site Proton donor is glutamate 211. Residues aspartate 248, glutamate 289, and aspartate 316 each coordinate Mg(2+). (2R)-2-phosphoglycerate is bound by residues lysine 341, arginine 370, serine 371, and lysine 392. The active-site Proton acceptor is lysine 341.

The protein belongs to the enolase family. The cofactor is Mg(2+).

The protein resides in the cytoplasm. It is found in the secreted. Its subcellular location is the cell surface. The catalysed reaction is (2R)-2-phosphoglycerate = phosphoenolpyruvate + H2O. Its pathway is carbohydrate degradation; glycolysis; pyruvate from D-glyceraldehyde 3-phosphate: step 4/5. Its function is as follows. Catalyzes the reversible conversion of 2-phosphoglycerate (2-PG) into phosphoenolpyruvate (PEP). It is essential for the degradation of carbohydrates via glycolysis. This is Enolase from Synechocystis sp. (strain ATCC 27184 / PCC 6803 / Kazusa).